A 461-amino-acid polypeptide reads, in one-letter code: Armadillo repeat-containing X-linked protein 1 (461 aa).

Residues 1-6 (MGRTRE) are Mitochondrial intermembrane-facing. Mitochondrion outer membrane (MOM)-targeting sequence stretches follow at residues 1–6 (MGRTRE) and 26–36 (RLTWGKDENEK). Residues 7–29 (AGCVAAGMVIGAGACYCVYRLTW) form a helical; Signal-anchor membrane-spanning segment. Over 30–461 (GKDENEKLWD…VKVLKVLTKL (432 aa)) the chain is Cytoplasmic. 2 disordered regions span residues 34–110 (NEKL…HSEG) and 148–192 (SSLP…PATA). A compositionally biased stretch (acidic residues) spans 38-51 (WDDEDEEEEEEEES). A compositionally biased stretch (basic and acidic residues) spans 96-110 (PDVKKEVYPESHSEG). Over residues 167–185 (SRARNRTSGKVKRKNRSKS) the composition is skewed to basic residues. 4 ARM repeats span residues 203-243 (PYKI…NNAA), 245-284 (SFNQNAIRELGGVPIIAKLIKTRDPIIREKTYNALNNLSV), 366-406 (PAMT…NIND), and 423-461 (SSLFFLFKESGVCVKKIKALASHKDLVVKVKVLKVLTKL).

It belongs to the eutherian X-chromosome-specific Armcx family. In terms of assembly, interacts with MIRO1.

It is found in the mitochondrion. It localises to the mitochondrion outer membrane. Functionally, regulates mitochondrial transport during axon regeneration. Increases the proportion of motile mitochondria by recruiting stationary mitochondria into the motile pool. Enhances mitochondria movement and neurite growth in both adult axons and embryonic neurons. Promotes neuronal survival and axon regeneration after nerve injury. May link mitochondria to the Trak1-kinesin motor complex via its interaction with MIRO1. This Rattus norvegicus (Rat) protein is Armadillo repeat-containing X-linked protein 1 (Armcx1).